Here is a 711-residue protein sequence, read N- to C-terminus: MTAIFPNSNIPFYYWASTNAQPQQPQQSIQQQQQQQQQQQQQQQQQQQQQQHHHHQNIPPTPQPIFSPQLINKNFGCYGTSNQIPMIPQALFPQQTFNYSGLPLCPSPPNYNNYHTITNSPPHQIHSPQLTIDQHSPPTCVSGELSPTPLSSSTGFSNNNNNNNNNNNNNNNSNSNNNINNNNNNNIKRSYSAMMEENNYPNNNNNNNNNNNNNNNNNNNNNNNNNNNNNNIINNNINSSGSISSYSNNSCIEDDYSSDKHCSDKESSNDCDDDADSYFEEYEDDQEAIRVSITPFVNLICKTPGITIPIIKIFSECSKEEITVKQMLLKVSLFLKIIIKIKIKIKIKILIFYFLFFKKIKNLCLEFNLDNSIHNTLIHSLVKIDGDIKMVKYLIDNGISEQELEFTKDILLTSNSQEIIKKKRERKRESISRGIRSPPNKWTKEESQNLIKLVTENGDKQWKKIATKLGGGKTGAQCAQHWKRVLSPEIKKGSWDEAEEELLFQLVDKHGQSWKNVAIEIKTRTDIQCRYQYFKAIMSRQTEWNQLEDDILTKKIKLMTQNNEKISFQQVSKHLARAKTTKIPRTALECKSRWSQLNSTNVNNNNNNNNNSITTSSSNTNQQQQSTMVTPTSSPLSSPIPMSTPIINNSMPQQQVQQIQQQQISIQPYPQSFIQETQGFYRGNDQMQYHIQNQTIPQYHHQHNNNPLLML.

Low complexity predominate over residues 24–50 (QPQQSIQQQQQQQQQQQQQQQQQQQQQ). Disordered stretches follow at residues 24 to 70 (QPQQ…SPQL) and 113 to 235 (NYHT…IINN). Polar residues-rich tracts occupy residues 113–139 (NYHT…SPPT) and 148–157 (TPLSSSTGFS). 2 stretches are compositionally biased toward low complexity: residues 158 to 187 (NNNN…NNNI) and 198 to 235 (NNYP…IINN). HTH myb-type domains are found at residues 428-490 (RESI…SPEI) and 491-542 (KKGS…SRQT). DNA-binding regions (H-T-H motif) lie at residues 462 to 486 (WKKI…KRVL) and 514 to 538 (WKNV…KAIM). The Myb-like domain maps to 540-598 (RQTEWNQLEDDILTKKIKLMTQNNEKISFQQVSKHLARAKTTKIPRTALECKSRWSQLN). The interval 598 to 640 (NSTNVNNNNNNNNNSITTSSSNTNQQQQSTMVTPTSSPLSSPI) is disordered.

It is found in the nucleus. Transcriptional activator that initiates multicellular development by induction of adenylyl cyclase expression. The chain is Myb-like protein B (mybB) from Dictyostelium discoideum (Social amoeba).